The sequence spans 167 residues: 3-isopropylmalate dehydratase small subunit (167 aa).

The protein belongs to the LeuD family. LeuD type 2 subfamily. As to quaternary structure, heterodimer of LeuC and LeuD.

It carries out the reaction (2R,3S)-3-isopropylmalate = (2S)-2-isopropylmalate. It functions in the pathway amino-acid biosynthesis; L-leucine biosynthesis; L-leucine from 3-methyl-2-oxobutanoate: step 2/4. Catalyzes the isomerization between 2-isopropylmalate and 3-isopropylmalate, via the formation of 2-isopropylmaleate. The protein is 3-isopropylmalate dehydratase small subunit of Sulfurimonas denitrificans (strain ATCC 33889 / DSM 1251) (Thiomicrospira denitrificans (strain ATCC 33889 / DSM 1251)).